Consider the following 430-residue polypeptide: Ribosomal protein uS12 methylthiotransferase RimO (430 aa).

The region spanning 1–116 (MKIGIKVLGC…IAEAIEKATP (116 aa)) is the MTTase N-terminal domain. [4Fe-4S] cluster contacts are provided by cysteine 10, cysteine 46, cysteine 79, cysteine 146, cysteine 150, and cysteine 153. In terms of domain architecture, Radical SAM core spans 132–362 (SCNNSFAYVK…LIFQSQIAYE (231 aa)). The 66-residue stretch at 365 to 430 (KRFVGKNLNV…DEYDLKGELI (66 aa)) folds into the TRAM domain.

Belongs to the methylthiotransferase family. RimO subfamily. The cofactor is [4Fe-4S] cluster.

It is found in the cytoplasm. The catalysed reaction is L-aspartate(89)-[ribosomal protein uS12]-hydrogen + (sulfur carrier)-SH + AH2 + 2 S-adenosyl-L-methionine = 3-methylsulfanyl-L-aspartate(89)-[ribosomal protein uS12]-hydrogen + (sulfur carrier)-H + 5'-deoxyadenosine + L-methionine + A + S-adenosyl-L-homocysteine + 2 H(+). In terms of biological role, catalyzes the methylthiolation of an aspartic acid residue of ribosomal protein uS12. This is Ribosomal protein uS12 methylthiotransferase RimO from Pseudothermotoga lettingae (strain ATCC BAA-301 / DSM 14385 / NBRC 107922 / TMO) (Thermotoga lettingae).